A 152-amino-acid polypeptide reads, in one-letter code: Large ribosomal subunit protein bL9 (152 aa).

It belongs to the bacterial ribosomal protein bL9 family.

Its function is as follows. Binds to the 23S rRNA. The chain is Large ribosomal subunit protein bL9 from Thermosynechococcus vestitus (strain NIES-2133 / IAM M-273 / BP-1).